We begin with the raw amino-acid sequence, 206 residues long: MEVDINGESRSTLTTLPFPGAEANSPGKAEAEKPRCSSTPCSPMRRTVSGYQILHMDSNYLVGFTTGEELLKLAQKCTGGEESKAEAMPSLRSKQLDAGLARSSRLYKTRSRYYQPYEIPAVNGRRRRRMPSSGDKCTKSLPYEPYKALHGPLPLCLLKGKRAHSKSLDYLNLDKMIKEPADTEVLQYQLQHLTLRGDRVFARNNT.

Residue methionine 1 is modified to N-acetylmethionine. Residues 1–41 are disordered; that stretch reads MEVDINGESRSTLTTLPFPGAEANSPGKAEAEKPRCSSTPC. 3 positions are modified to phosphoserine: serine 25, serine 140, and serine 167.

It belongs to the UNC119-binding protein family. Interacts with UNC119 and UNC119B; interaction preferentially takes place when UNC119 and UNC119B are unliganded with myristoylated proteins. In terms of processing, phosphorylated. In terms of tissue distribution, high expression in normal macrophages, monocytes, and cultured rheumatoid arthritis synovial fibroblasts (RASFs), with lower expression in B- and T-cells, and little to no expression in other tissues and cell lines.

The protein resides in the cytoplasm. It localises to the cell projection. Its subcellular location is the cilium. In terms of biological role, regulates the macrophage function, by enhancing the resolution of inflammation and wound repair functions mediated by M2 macrophages. The regulation of macrophage function is, due at least in part, to its ability to inhibit glycolysis. May also play a role in trafficking of proteins via its interaction with UNC119 and UNC119B cargo adapters: may help the release of UNC119 and UNC119B cargo or the recycling of UNC119 and UNC119B. May play a role in ciliary membrane localization via its interaction with UNC119B and protein transport into photoreceptor cells. The polypeptide is Macrophage immunometabolism regulator (Homo sapiens (Human)).